Consider the following 712-residue polypeptide: Probable GTP diphosphokinase RSH3, chloroplastic (712 aa).

The transit peptide at 1–64 (MVVATTIALY…LLFSGASVKS (64 aa)) directs the protein to the chloroplast. A compositionally biased stretch (low complexity) spans 65 to 74 (SSSSSSSHPS). The disordered stretch occupies residues 65–84 (SSSSSSSHPSVGEELASIRH). Residues 237–338 (YLQHCVETAM…IKLADRLHNM (102 aa)) enclose the HD domain.

Belongs to the RelA/SpoT family.

Its subcellular location is the plastid. It is found in the chloroplast. The enzyme catalyses GTP + ATP = guanosine 3'-diphosphate 5'-triphosphate + AMP. Its function is as follows. Probable ppGpp (guanosine 3'-diphosphate 5'-diphosphate) synthetase that may be involved in a rapid plant ppGpp-mediated response to pathogens and other stresses. The protein is Probable GTP diphosphokinase RSH3, chloroplastic (RSH3) of Arabidopsis thaliana (Mouse-ear cress).